Reading from the N-terminus, the 510-residue chain is Amidophosphoribosyltransferase (510 aa).

Cysteine 2 serves as the catalytic Nucleophile. The 238-residue stretch at 2 to 239 (CGILGIALAD…PGEAVIIPKD (238 aa)) folds into the Glutamine amidotransferase type-2 domain. Mg(2+) is bound by residues aspartate 373 and aspartate 374.

It in the C-terminal section; belongs to the purine/pyrimidine phosphoribosyltransferase family. The cofactor is Mg(2+).

It catalyses the reaction 5-phospho-beta-D-ribosylamine + L-glutamate + diphosphate = 5-phospho-alpha-D-ribose 1-diphosphate + L-glutamine + H2O. Its pathway is purine metabolism; IMP biosynthesis via de novo pathway; N(1)-(5-phospho-D-ribosyl)glycinamide from 5-phospho-alpha-D-ribose 1-diphosphate: step 1/2. In Lachancea kluyveri (Yeast), this protein is Amidophosphoribosyltransferase (ADE4).